The sequence spans 148 residues: [Ribosomal protein bS18]-alanine N-acetyltransferase (148 aa).

In terms of domain architecture, N-acetyltransferase spans 2-147 (NTISILSTTD…DAIIMALPIS (146 aa)). Residues 69 to 71 (IAV) and 77 to 82 (RRGLGR) contribute to the acetyl-CoA site. Glutamate 103 functions as the Proton acceptor in the catalytic mechanism. Asparagine 108 contributes to the acetyl-CoA binding site. Residue tyrosine 115 is the Proton donor of the active site.

The protein belongs to the acetyltransferase family. RimI subfamily.

Its subcellular location is the cytoplasm. It catalyses the reaction N-terminal L-alanyl-[ribosomal protein bS18] + acetyl-CoA = N-terminal N(alpha)-acetyl-L-alanyl-[ribosomal protein bS18] + CoA + H(+). Acetylates the N-terminal alanine of ribosomal protein bS18. The polypeptide is [Ribosomal protein bS18]-alanine N-acetyltransferase (Salmonella typhimurium (strain LT2 / SGSC1412 / ATCC 700720)).